We begin with the raw amino-acid sequence, 516 residues long: Coiled-coil domain-containing protein 149 (516 aa).

The span at 1–18 (MANQLRERHQSLKKKYGE) shows a compositional bias: basic and acidic residues. The tract at residues 1–29 (MANQLRERHQSLKKKYGELIDGDPSVPPE) is disordered. Coiled coils occupy residues 1-195 (MANQ…ALEK) and 259-286 (IQHQ…LEVS). The span at 321–332 (PHHKPLTNEEHG) shows a compositional bias: basic and acidic residues. Disordered regions lie at residues 321-350 (PHHK…SDNE) and 406-452 (ETSF…SLGD). Polar residues predominate over residues 414–436 (DSQSTASSQENHDNLQSPFSSPE).

The protein belongs to the CCDC149 family.

This chain is Coiled-coil domain-containing protein 149 (ccdc149), found in Xenopus laevis (African clawed frog).